Here is a 1112-residue protein sequence, read N- to C-terminus: DNA polymerase II large subunit (1112 aa).

Belongs to the archaeal DNA polymerase II family. Heterodimer of a large subunit and a small subunit.

It carries out the reaction DNA(n) + a 2'-deoxyribonucleoside 5'-triphosphate = DNA(n+1) + diphosphate. It catalyses the reaction Exonucleolytic cleavage in the 3'- to 5'-direction to yield nucleoside 5'-phosphates.. Functionally, possesses two activities: a DNA synthesis (polymerase) and an exonucleolytic activity that degrades single-stranded DNA in the 3'- to 5'-direction. Has a template-primer preference which is characteristic of a replicative DNA polymerase. This Cenarchaeum symbiosum (strain A) protein is DNA polymerase II large subunit.